The following is a 210-amino-acid chain: Somatotropin-2 (210 aa).

A signal peptide spans Met-1 to Ala-22. His-38 is a Zn(2+) binding site. Cys-71 and Cys-183 are disulfide-bonded. Glu-192 contacts Zn(2+). The cysteines at positions 200 and 208 are disulfide-linked.

Belongs to the somatotropin/prolactin family.

Its subcellular location is the secreted. Growth hormone plays an important role in growth control and is involved in the regulation of several anabolic processes. Implicated as an osmoregulatory substance important for seawater adaptation. The protein is Somatotropin-2 (gh2) of Carassius auratus (Goldfish).